Consider the following 546-residue polypeptide: Chaperonin GroEL 5 (546 aa).

Residues Thr30–Pro33, Lys51, Asp87–Thr91, Gly415, and Asp495 each bind ATP.

Belongs to the chaperonin (HSP60) family. As to quaternary structure, forms a cylinder of 14 subunits composed of two heptameric rings stacked back-to-back. Interacts with the co-chaperonin GroES.

The protein localises to the cytoplasm. The catalysed reaction is ATP + H2O + a folded polypeptide = ADP + phosphate + an unfolded polypeptide.. Together with its co-chaperonin GroES, plays an essential role in assisting protein folding. The GroEL-GroES system forms a nano-cage that allows encapsulation of the non-native substrate proteins and provides a physical environment optimized to promote and accelerate protein folding. The polypeptide is Chaperonin GroEL 5 (Paraburkholderia xenovorans (strain LB400)).